The chain runs to 438 residues: Putative F-box/FBD/LRR-repeat protein At2g05300 (438 aa).

Residues 13-59 (EDRISQLPDPLLTQILNLLPTEEAVKTSVLSTRWRTLWLWVPNLELS) enclose the F-box domain. LRR repeat units follow at residues 135–166 (CDSLVSLRLYRLSLVDAEFVSLPCLKILRLKD), 167–192 (IVFHNETTFERLVSSCPVLEELKIDV), 235–261 (CLIIDDSVSESFVVTDLESNAKFDISL), and 318–346 (YVTLNASELEWFPIFLRSSPNLKSLILER). Residues 362 to 409 (SMSSVPECLLTSLEFVEFKAPICGLGPEMMLVWYFLKNSPTLKKLTLP) enclose the FBD domain.

This Arabidopsis thaliana (Mouse-ear cress) protein is Putative F-box/FBD/LRR-repeat protein At2g05300.